Consider the following 260-residue polypeptide: NH(3)-dependent NAD(+) synthetase (260 aa).

31-38 (GLSGGLDS) contributes to the ATP binding site. A Mg(2+)-binding site is contributed by aspartate 37. Arginine 112 serves as a coordination point for deamido-NAD(+). ATP is bound at residue threonine 132. Glutamate 137 is a binding site for Mg(2+). Residues lysine 161 and serine 183 each contribute to the ATP site.

This sequence belongs to the NAD synthetase family. Homodimer.

The enzyme catalyses deamido-NAD(+) + NH4(+) + ATP = AMP + diphosphate + NAD(+) + H(+). It functions in the pathway cofactor biosynthesis; NAD(+) biosynthesis; NAD(+) from deamido-NAD(+) (ammonia route): step 1/1. Functionally, catalyzes the ATP-dependent amidation of deamido-NAD to form NAD. Uses ammonia as a nitrogen source. In Helicobacter pylori (strain ATCC 700392 / 26695) (Campylobacter pylori), this protein is NH(3)-dependent NAD(+) synthetase.